The primary structure comprises 281 residues: Microtubule-associated protein RP/EB family member 3 (281 aa).

Residues 14-116 (NLSRHDMLAW…FIQWFKKFFD (103 aa)) form the Calponin-homology (CH) domain. The tract at residues 157–181 (VPQRTSPTGPKNMQTSGRLSNVAPP) is disordered. A compositionally biased stretch (polar residues) spans 158–175 (PQRTSPTGPKNMQTSGRL). A phosphoserine mark is found at Ser162 and Ser176. Residues 194–264 (GGHETDAQIL…LYATEEGFAP (71 aa)) form the EB1 C-terminal domain. The APC-binding stretch occupies residues 217 to 260 (DGLEKERDFYFSKLRDIELICQEHESENSPVISGIIGILYATEE). The DCTN1-binding stretch occupies residues 217 to 281 (DGLEKERDFY…EHQQEDQDEY (65 aa)). The interval 261–281 (GFAPPEDDEIEEHQQEDQDEY) is disordered. Over residues 272–281 (EHQQEDQDEY) the composition is skewed to basic and acidic residues.

It belongs to the MAPRE family. As to quaternary structure, homodimer. Heterodimer with MAPRE1. Binds monomeric and polymerized GTP-bound tubulin. Interacts with APC2. Interacts with DCTN1 and SRCIN1. Binds to the C-terminal domain of APC. Interacts (via C-terminus) with CLIP1. Interacts with SLAIN2 and SLAIN1. Interacts with AKAP9. Interacts with PDE4DIP. Interacts with PDE4DIP isoform 13/MMG8/SMYLE; this interaction is required for its recruitment to the Golgi apparatus. Predominantly expressed in brain and muscle.

It localises to the cytoplasm. The protein resides in the cytoskeleton. Plus-end tracking protein (+TIP) that binds to the plus-end of microtubules and regulates the dynamics of the microtubule cytoskeleton. Promotes microtubule growth. May be involved in spindle function by stabilizing microtubules and anchoring them at centrosomes. Also acts as a regulator of minus-end microtubule organization: interacts with the complex formed by AKAP9 and PDE4DIP, leading to recruit CAMSAP2 to the Golgi apparatus, thereby tethering non-centrosomal minus-end microtubules to the Golgi, an important step for polarized cell movement. Promotes elongation of CAMSAP2-decorated microtubule stretches on the minus-end of microtubules. The chain is Microtubule-associated protein RP/EB family member 3 (MAPRE3) from Homo sapiens (Human).